We begin with the raw amino-acid sequence, 614 residues long: UvrABC system protein C (614 aa).

The GIY-YIG domain maps to 20 to 98 (TAPGVYRMYA…IKSLSPRYNV (79 aa)). The region spanning 207–242 (DELTRELGEQMQAASEALEFEQAARLRDLISSLRSM) is the UVR domain.

Belongs to the UvrC family. In terms of assembly, interacts with UvrB in an incision complex.

It is found in the cytoplasm. Functionally, the UvrABC repair system catalyzes the recognition and processing of DNA lesions. UvrC both incises the 5' and 3' sides of the lesion. The N-terminal half is responsible for the 3' incision and the C-terminal half is responsible for the 5' incision. This chain is UvrABC system protein C, found in Stenotrophomonas maltophilia (strain K279a).